The primary structure comprises 189 residues: Elongation factor P (189 aa).

At lysine 34 the chain carries N6-(3,6-diaminohexanoyl)-5-hydroxylysine.

It belongs to the elongation factor P family. In terms of processing, may be beta-lysylated on the epsilon-amino group of Lys-34 by the combined action of EpmA and EpmB, and then hydroxylated on the C5 position of the same residue by EpmC (if this protein is present). Lysylation is critical for the stimulatory effect of EF-P on peptide-bond formation. The lysylation moiety may extend toward the peptidyltransferase center and stabilize the terminal 3-CCA end of the tRNA. Hydroxylation of the C5 position on Lys-34 may allow additional potential stabilizing hydrogen-bond interactions with the P-tRNA.

The protein resides in the cytoplasm. It functions in the pathway protein biosynthesis; polypeptide chain elongation. Functionally, involved in peptide bond synthesis. Alleviates ribosome stalling that occurs when 3 or more consecutive Pro residues or the sequence PPG is present in a protein, possibly by augmenting the peptidyl transferase activity of the ribosome. Modification of Lys-34 is required for alleviation. This is Elongation factor P from Francisella tularensis subsp. novicida (strain U112).